The chain runs to 159 residues: Urease accessory protein UreE (159 aa).

Residues 140–159 (GAYHGTGHHHHGHGHDPHHG) are disordered.

It belongs to the UreE family.

It localises to the cytoplasm. Its function is as follows. Involved in urease metallocenter assembly. Binds nickel. Probably functions as a nickel donor during metallocenter assembly. This Sinorhizobium fredii (strain NBRC 101917 / NGR234) protein is Urease accessory protein UreE.